The sequence spans 360 residues: MKPSIVAKLEALQERHEEVQALLGDAGVIADQDRFRALSREYAQLTDVSHCFLAWRQVQDDLTTAEMLLDDPEMRDMAQEELKEARGRLAELEQQLQILLLPKDPDDERDCFLEVRAGTGGDEAALFAGDLFRMYSRYAEARRWRIEIMSASEGEHGGYKEVIARVSGDGAYGRLKFESGGHRVQRVPATESQGRIHTSACTVAVMPAVPEAELPQINPADLRIDTYRSSGAGGQHVNTTDSAIRITHLPTGIVVECQDERSQHKNKAKAMSVLGARIRAAEIAKRQQEEASTRRNLLGSGDRSDRVRTYNFPQGRVTDHRINLTLYRLDEVMEGKLDNLIEPIVQEHQADQLSALAEQE.

Glutamine 235 carries the N5-methylglutamine modification. The disordered stretch occupies residues 285-304 (KRQQEEASTRRNLLGSGDRS).

It belongs to the prokaryotic/mitochondrial release factor family. In terms of processing, methylated by PrmC. Methylation increases the termination efficiency of RF1.

It localises to the cytoplasm. In terms of biological role, peptide chain release factor 1 directs the termination of translation in response to the peptide chain termination codons UAG and UAA. In Edwardsiella ictaluri (strain 93-146), this protein is Peptide chain release factor 1.